The chain runs to 145 residues: Protein SprT-like (145 aa).

A SprT-like domain is found at 4–140 (TNYVQEVSLA…VCGNCHGKLI (137 aa)). Position 64 (His-64) interacts with Zn(2+). Glu-65 is an active-site residue. His-68 contacts Zn(2+).

The protein belongs to the SprT family. The cofactor is Zn(2+).

The protein resides in the cytoplasm. The protein is Protein SprT-like of Streptococcus pyogenes serotype M18 (strain MGAS8232).